We begin with the raw amino-acid sequence, 270 residues long: Diaminopimelate epimerase (270 aa).

Positions 15, 49, and 66 each coordinate substrate. Cys-75 (proton donor) is an active-site residue. Substrate-binding positions include 76–77 (GN), Asn-155, Asn-187, and 204–205 (ER). Cys-213 acts as the Proton acceptor in catalysis. 214–215 (GS) is a substrate binding site.

It belongs to the diaminopimelate epimerase family. In terms of assembly, homodimer.

Its subcellular location is the cytoplasm. The enzyme catalyses (2S,6S)-2,6-diaminopimelate = meso-2,6-diaminopimelate. The protein operates within amino-acid biosynthesis; L-lysine biosynthesis via DAP pathway; DL-2,6-diaminopimelate from LL-2,6-diaminopimelate: step 1/1. In terms of biological role, catalyzes the stereoinversion of LL-2,6-diaminopimelate (L,L-DAP) to meso-diaminopimelate (meso-DAP), a precursor of L-lysine and an essential component of the bacterial peptidoglycan. This is Diaminopimelate epimerase from Rickettsia africae (strain ESF-5).